Here is a 149-residue protein sequence, read N- to C-terminus: IQ domain-containing protein F5 (149 aa).

IQ domains follow at residues 12–41 (ENKAIVSIQAWWRGTLVRRTLLHAALRAWI) and 68–97 (QEWAVVKLQSWVRMWCIRLRYLRLLHAVRI).

This chain is IQ domain-containing protein F5 (IQCF5), found in Bos taurus (Bovine).